A 92-amino-acid polypeptide reads, in one-letter code: Acylphosphatase (92 aa).

Residues 5 to 92 form the Acylphosphatase-like domain; sequence RAHVVVSGKV…GEFSGFKIAF (88 aa). Residues Arg-20 and Asn-38 contribute to the active site.

The protein belongs to the acylphosphatase family.

It catalyses the reaction an acyl phosphate + H2O = a carboxylate + phosphate + H(+). The sequence is that of Acylphosphatase (acyP) from Pelotomaculum thermopropionicum (strain DSM 13744 / JCM 10971 / SI).